We begin with the raw amino-acid sequence, 469 residues long: 6-phospho-beta-galactosidase (469 aa).

The D-galactose 6-phosphate site is built by glutamine 18, histidine 115, asparagine 158, glutamate 159, and asparagine 296. The active-site Proton donor is glutamate 159. Catalysis depends on glutamate 374, which acts as the Nucleophile. D-galactose 6-phosphate-binding residues include serine 429, tryptophan 430, lysine 436, and tyrosine 438.

Belongs to the glycosyl hydrolase 1 family.

The enzyme catalyses a 6-phospho-beta-D-galactoside + H2O = D-galactose 6-phosphate + an alcohol. It participates in carbohydrate metabolism; lactose degradation; D-galactose 6-phosphate and beta-D-glucose from lactose 6-phosphate: step 1/1. The protein is 6-phospho-beta-galactosidase of Staphylococcus haemolyticus (strain JCSC1435).